We begin with the raw amino-acid sequence, 214 residues long: Adenylate kinase (214 aa).

Residue 14-19 (GSGKGT) coordinates ATP. The tract at residues 32–61 (SVGKVLRTVMESNTAEADVVKKFIKSGKLV) is NMP. Residues Arg38, 59–61 (KLV), 87–90 (GYPR), and Gln94 each bind AMP. The interval 124 to 162 (GRISCTDCGTIYNKLYCMPKINGVCDICNSSSFQNRVDD) is LID. Residue Arg125 participates in ATP binding. Cys128 and Cys131 together coordinate Zn(2+). Residue 134 to 135 (IY) participates in ATP binding. 2 residues coordinate Zn(2+): Cys148 and Cys151. Residues Arg159 and Arg170 each coordinate AMP. ATP is bound at residue Gln198.

Belongs to the adenylate kinase family. In terms of assembly, monomer.

The protein localises to the cytoplasm. It carries out the reaction AMP + ATP = 2 ADP. It functions in the pathway purine metabolism; AMP biosynthesis via salvage pathway; AMP from ADP: step 1/1. In terms of biological role, catalyzes the reversible transfer of the terminal phosphate group between ATP and AMP. Plays an important role in cellular energy homeostasis and in adenine nucleotide metabolism. This chain is Adenylate kinase, found in Orientia tsutsugamushi (strain Ikeda) (Rickettsia tsutsugamushi).